A 343-amino-acid polypeptide reads, in one-letter code: Ion-translocating oxidoreductase complex subunit D (343 aa).

The next 4 membrane-spanning stretches (helical) occupy residues 24–44, 45–65, 69–91, and 124–144; these read VLLATVPGILALTWLFGAGTL, YNLALASLFALAFEAAILAAR, LAFFLKDYSALVTAVLLALALPP, and AMLGYVVVLISFPVEMTSWPA. Threonine 171 carries the post-translational modification FMN phosphoryl threonine. 5 helical membrane passes run 197 to 217, 221 to 241, 251 to 271, 284 to 304, and 305 to 325; these read FGGAGSEAVNLAFLAGGLYLL, LITWHAPVGMLAALFVMSLLF, GSPLFHLLTGATMLGAFFIVT, LVFGIGVGVLVYVIRAWGGYP, and DAVAFAVLLMNLAAPTIDYYT.

This sequence belongs to the NqrB/RnfD family. In terms of assembly, the complex is composed of six subunits: RnfA, RnfB, RnfC, RnfD, RnfE and RnfG. FMN is required as a cofactor.

The protein resides in the cell inner membrane. In terms of biological role, part of a membrane-bound complex that couples electron transfer with translocation of ions across the membrane. This is Ion-translocating oxidoreductase complex subunit D from Ectopseudomonas mendocina (strain ymp) (Pseudomonas mendocina).